A 58-amino-acid chain; its full sequence is Leucine zipper protein 6 (58 aa).

In terms of tissue distribution, widely expressed, highest levels found in brain, placenta, spleen, testis, and ovary. Up-regulated in some tumor cells.

This chain is Leucine zipper protein 6 (LUZP6), found in Homo sapiens (Human).